The sequence spans 545 residues: CTP synthase (545 aa).

Positions M1 to L266 are amidoligase domain. Residue S14 coordinates CTP. S14 contacts UTP. ATP is bound by residues S15–I20 and D72. Positions 72 and 140 each coordinate Mg(2+). Residues D147–E149, K187–Q192, and K223 each bind CTP. UTP-binding positions include K187 to Q192 and K223. K239–V241 contacts ATP. The region spanning T291 to G542 is the Glutamine amidotransferase type-1 domain. G352 serves as a coordination point for L-glutamine. C379 acts as the Nucleophile; for glutamine hydrolysis in catalysis. L-glutamine-binding positions include L380–Q383, E403, and R470. Active-site residues include H515 and E517.

This sequence belongs to the CTP synthase family. In terms of assembly, homotetramer.

It catalyses the reaction UTP + L-glutamine + ATP + H2O = CTP + L-glutamate + ADP + phosphate + 2 H(+). The catalysed reaction is L-glutamine + H2O = L-glutamate + NH4(+). The enzyme catalyses UTP + NH4(+) + ATP = CTP + ADP + phosphate + 2 H(+). The protein operates within pyrimidine metabolism; CTP biosynthesis via de novo pathway; CTP from UDP: step 2/2. Its activity is regulated as follows. Allosterically activated by GTP, when glutamine is the substrate; GTP has no effect on the reaction when ammonia is the substrate. The allosteric effector GTP functions by stabilizing the protein conformation that binds the tetrahedral intermediate(s) formed during glutamine hydrolysis. Inhibited by the product CTP, via allosteric rather than competitive inhibition. Its function is as follows. Catalyzes the ATP-dependent amination of UTP to CTP with either L-glutamine or ammonia as the source of nitrogen. Regulates intracellular CTP levels through interactions with the four ribonucleotide triphosphates. The polypeptide is CTP synthase (Photorhabdus laumondii subsp. laumondii (strain DSM 15139 / CIP 105565 / TT01) (Photorhabdus luminescens subsp. laumondii)).